The sequence spans 585 residues: Neopullulanase 2 (585 aa).

Ca(2+)-binding residues include N143, D145, N148, D149, G169, and D171. 2 residues coordinate substrate: H244 and R323. D325 acts as the Nucleophile in catalysis. E354 functions as the Proton donor in the catalytic mechanism. Substrate contacts are provided by residues H420–D421, D465, and R469.

This sequence belongs to the glycosyl hydrolase 13 family. In terms of assembly, monomer. Ca(2+) serves as cofactor.

The catalysed reaction is Hydrolysis of pullulan to panose (6-alpha-D-glucosylmaltose).. Hydrolyzes pullulan efficiently but only a small amount of starch. Endohydrolysis of 1,4-alpha-glucosidic linkages in pullulan to form panose. Also cleaves (1-6)-alpha-glucosidic linkages to form maltotriose. The chain is Neopullulanase 2 (tvaII) from Thermoactinomyces vulgaris.